Reading from the N-terminus, the 670-residue chain is Microtubule-associated protein ssm4 (670 aa).

Residues 23–65 (GSTDFESGIWLGVELLNGKGKNDGSVKGKRYFSCEKGKGIFVR) enclose the CAP-Gly domain. Coiled-coil stretches lie at residues 209 to 254 (KSEL…KNSI) and 404 to 582 (VKTR…KLAD). Ser460 bears the Phosphoserine mark. Thr606 bears the Phosphothreonine mark.

It is found in the cytoplasm. The protein resides in the cytoskeleton. Its subcellular location is the spindle. Binds to nuclear microtubules with the effect of either modifying their structure or function. This then promotes meiotic nuclear division. The chain is Microtubule-associated protein ssm4 (ssm4) from Schizosaccharomyces pombe (strain 972 / ATCC 24843) (Fission yeast).